A 142-amino-acid polypeptide reads, in one-letter code: Transcriptional regulator MraZ (142 aa).

2 SpoVT-AbrB domains span residues 5–51 (ASSL…PRNE) and 77–120 (AMDV…DAAT).

Belongs to the MraZ family. In terms of assembly, forms oligomers.

It localises to the cytoplasm. Its subcellular location is the nucleoid. The protein is Transcriptional regulator MraZ of Polaromonas sp. (strain JS666 / ATCC BAA-500).